The chain runs to 282 residues: NADPH-dependent 7-cyano-7-deazaguanine reductase (282 aa).

88–90 provides a ligand contact to substrate; sequence IES. NADPH is bound at residue 90 to 91; that stretch reads SK. The Thioimide intermediate role is filled by cysteine 190. Aspartate 197 serves as the catalytic Proton donor. A substrate-binding site is contributed by 229–230; sequence HE. Position 258–259 (258–259) interacts with NADPH; it reads RG.

This sequence belongs to the GTP cyclohydrolase I family. QueF type 2 subfamily. In terms of assembly, homodimer.

It localises to the cytoplasm. It carries out the reaction 7-aminomethyl-7-carbaguanine + 2 NADP(+) = 7-cyano-7-deazaguanine + 2 NADPH + 3 H(+). It participates in tRNA modification; tRNA-queuosine biosynthesis. Functionally, catalyzes the NADPH-dependent reduction of 7-cyano-7-deazaguanine (preQ0) to 7-aminomethyl-7-deazaguanine (preQ1). This chain is NADPH-dependent 7-cyano-7-deazaguanine reductase, found in Escherichia coli O81 (strain ED1a).